Reading from the N-terminus, the 253-residue chain is 4-hydroxy-tetrahydrodipicolinate reductase (253 aa).

Residues 8 to 13, aspartate 34, 76 to 78, and 108 to 111 each bind NAD(+); these read GAKGRM, GTT, and APNF. Histidine 138 serves as the catalytic Proton donor/acceptor. Histidine 139 serves as a coordination point for (S)-2,3,4,5-tetrahydrodipicolinate. Lysine 142 functions as the Proton donor in the catalytic mechanism. 148–149 serves as a coordination point for (S)-2,3,4,5-tetrahydrodipicolinate; it reads GT.

It belongs to the DapB family.

The protein resides in the cytoplasm. It catalyses the reaction (S)-2,3,4,5-tetrahydrodipicolinate + NAD(+) + H2O = (2S,4S)-4-hydroxy-2,3,4,5-tetrahydrodipicolinate + NADH + H(+). The enzyme catalyses (S)-2,3,4,5-tetrahydrodipicolinate + NADP(+) + H2O = (2S,4S)-4-hydroxy-2,3,4,5-tetrahydrodipicolinate + NADPH + H(+). It functions in the pathway amino-acid biosynthesis; L-lysine biosynthesis via DAP pathway; (S)-tetrahydrodipicolinate from L-aspartate: step 4/4. Catalyzes the conversion of 4-hydroxy-tetrahydrodipicolinate (HTPA) to tetrahydrodipicolinate. The protein is 4-hydroxy-tetrahydrodipicolinate reductase of Bifidobacterium animalis subsp. lactis (strain AD011).